A 107-amino-acid chain; its full sequence is uncharacterized protein (107 aa).

Helical transmembrane passes span 15 to 35, 43 to 63, and 87 to 107; these read TGSYNWFDHFFLCVYLALGIS, LYRVCFIFLFTGGFFLFWLSY, and YFPSSTWIAVLVFSWRHIFCF.

It is found in the membrane. This is an uncharacterized protein from Saccharomyces cerevisiae (strain ATCC 204508 / S288c) (Baker's yeast).